An 81-amino-acid chain; its full sequence is Beta-toxin Ct13 (81 aa).

A signal peptide spans 1-18; the sequence is MKVLILIIASVLLIGVEC. Positions 19 to 78 constitute an LCN-type CS-alpha/beta domain; the sequence is KDGFPVDSEGCILLPCATRAYCSVNCKFMKGSGGSCDTLACHCKGLPEDAKVQDKPTNKC. Intrachain disulfides connect cysteine 29–cysteine 78, cysteine 34–cysteine 54, cysteine 40–cysteine 59, and cysteine 44–cysteine 61. Residue cysteine 78 is modified to Cysteine amide.

This sequence belongs to the long (4 C-C) scorpion toxin superfamily. Sodium channel inhibitor family. Beta subfamily. In terms of tissue distribution, expressed by the venom gland.

It localises to the secreted. In terms of biological role, beta toxins bind voltage-independently at site-4 of sodium channels (Nav) and shift the voltage of activation toward more negative potentials thereby affecting sodium channel activation and promoting spontaneous and repetitive firing. In Centruroides tecomanus (Scorpion), this protein is Beta-toxin Ct13.